The primary structure comprises 570 residues: Sulfite reductase [NADPH] hemoprotein beta-component (570 aa).

The [4Fe-4S] cluster site is built by C433, C439, C478, and C482. C482 lines the siroheme pocket.

It belongs to the nitrite and sulfite reductase 4Fe-4S domain family. Alpha(8)-beta(8). The alpha component is a flavoprotein, the beta component is a hemoprotein. It depends on siroheme as a cofactor. Requires [4Fe-4S] cluster as cofactor.

The enzyme catalyses hydrogen sulfide + 3 NADP(+) + 3 H2O = sulfite + 3 NADPH + 4 H(+). Its pathway is sulfur metabolism; hydrogen sulfide biosynthesis; hydrogen sulfide from sulfite (NADPH route): step 1/1. Component of the sulfite reductase complex that catalyzes the 6-electron reduction of sulfite to sulfide. This is one of several activities required for the biosynthesis of L-cysteine from sulfate. This is Sulfite reductase [NADPH] hemoprotein beta-component from Aeromonas hydrophila subsp. hydrophila (strain ATCC 7966 / DSM 30187 / BCRC 13018 / CCUG 14551 / JCM 1027 / KCTC 2358 / NCIMB 9240 / NCTC 8049).